Consider the following 574-residue polypeptide: ATP synthase subunit beta, mitochondrial (574 aa).

The N-terminal 26 residues, 1 to 26, are a transit peptide targeting the mitochondrion; the sequence is MLSSVRLAALRAGKTNSVFQAVRAFA. Residue 183–190 coordinates ATP; sequence GGAGVGKT.

The protein belongs to the ATPase alpha/beta chains family. F-type ATPases have 2 components, CF(1) - the catalytic core - and CF(0) - the membrane proton channel. CF(1) has five subunits: alpha(3), beta(3), gamma(1), delta(1), epsilon(1). CF(0) has three main subunits: a, b and c.

Its subcellular location is the mitochondrion. The protein localises to the mitochondrion inner membrane. It catalyses the reaction ATP + H2O + 4 H(+)(in) = ADP + phosphate + 5 H(+)(out). In terms of biological role, mitochondrial membrane ATP synthase (F(1)F(0) ATP synthase or Complex V) produces ATP from ADP in the presence of a proton gradient across the membrane which is generated by electron transport complexes of the respiratory chain. F-type ATPases consist of two structural domains, F(1) - containing the extramembraneous catalytic core, and F(0) - containing the membrane proton channel, linked together by a central stalk and a peripheral stalk. During catalysis, ATP synthesis in the catalytic domain of F(1) is coupled via a rotary mechanism of the central stalk subunits to proton translocation. Subunits alpha and beta form the catalytic core in F(1). Rotation of the central stalk against the surrounding alpha(3)beta(3) subunits leads to hydrolysis of ATP in three separate catalytic sites on the beta subunits. The polypeptide is ATP synthase subunit beta, mitochondrial (ATP2) (Chlamydomonas reinhardtii (Chlamydomonas smithii)).